The chain runs to 359 residues: Phospho-N-acetylmuramoyl-pentapeptide-transferase (359 aa).

The next 10 helical transmembrane spans lie at 3 to 23, 55 to 75, 80 to 100, 117 to 137, 156 to 176, 187 to 207, 231 to 251, 255 to 275, 280 to 300, and 334 to 354; these read LILI…PALI, VAIL…GMAM, PSAS…VGFI, TAKT…ALQF, IATV…VVSA, LDGL…LITF, LALV…WNAA, IFMG…ISVT, ILAV…VVQI, and FWLL…GEWL.

Belongs to the glycosyltransferase 4 family. MraY subfamily. Requires Mg(2+) as cofactor.

It is found in the cell membrane. It carries out the reaction UDP-N-acetyl-alpha-D-muramoyl-L-alanyl-gamma-D-glutamyl-meso-2,6-diaminopimeloyl-D-alanyl-D-alanine + di-trans,octa-cis-undecaprenyl phosphate = di-trans,octa-cis-undecaprenyl diphospho-N-acetyl-alpha-D-muramoyl-L-alanyl-D-glutamyl-meso-2,6-diaminopimeloyl-D-alanyl-D-alanine + UMP. It functions in the pathway cell wall biogenesis; peptidoglycan biosynthesis. Functionally, catalyzes the initial step of the lipid cycle reactions in the biosynthesis of the cell wall peptidoglycan: transfers peptidoglycan precursor phospho-MurNAc-pentapeptide from UDP-MurNAc-pentapeptide onto the lipid carrier undecaprenyl phosphate, yielding undecaprenyl-pyrophosphoryl-MurNAc-pentapeptide, known as lipid I. The protein is Phospho-N-acetylmuramoyl-pentapeptide-transferase of Mycolicibacterium smegmatis (strain ATCC 700084 / mc(2)155) (Mycobacterium smegmatis).